A 250-amino-acid polypeptide reads, in one-letter code: Pyrroloquinoline-quinone synthase (250 aa).

This sequence belongs to the PqqC family.

The catalysed reaction is 6-(2-amino-2-carboxyethyl)-7,8-dioxo-1,2,3,4,7,8-hexahydroquinoline-2,4-dicarboxylate + 3 O2 = pyrroloquinoline quinone + 2 H2O2 + 2 H2O + H(+). The protein operates within cofactor biosynthesis; pyrroloquinoline quinone biosynthesis. In terms of biological role, ring cyclization and eight-electron oxidation of 3a-(2-amino-2-carboxyethyl)-4,5-dioxo-4,5,6,7,8,9-hexahydroquinoline-7,9-dicarboxylic-acid to PQQ. The sequence is that of Pyrroloquinoline-quinone synthase from Pseudomonas aeruginosa (strain LESB58).